The primary structure comprises 1338 residues: Apoptotic chromatin condensation inducer in the nucleus (1338 aa).

The segment at 1–57 (MWGRKRPNSSGETRGILSGNRGVDYGSGRGQSGPFEGRWRKLPKMPEAVGTDPSTSR) is disordered. The SAP domain maps to 72–106 (LQALRVTDLKAALEQRGLAKSGQKSALVKRLKGAL). Residues S132, S166, S169, S208, S210, and S216 each carry the phosphoserine modification. The interval 155-866 (EAREAAELEE…ATQKKPSISI (712 aa)) is disordered. Residues 161-171 (ELEEASAESED) are compositionally biased toward acidic residues. The span at 219-228 (EKPRKGERRS) shows a compositional bias: basic and acidic residues. A Phosphoserine modification is found at S242. T253 carries the phosphothreonine modification. A Glycyl lysine isopeptide (Lys-Gly) (interchain with G-Cter in SUMO1) cross-link involves residue K267. A compositionally biased stretch (acidic residues) spans 269 to 290 (EEEEEEEEEEEDDDDEEEEEVD). S295 is subject to Phosphoserine. Residues 313–353 (ERTRAKPEKVVDEKPLNIRSQEKGELEKGGRVTRSQEEARR) show a composition bias toward basic and acidic residues. K318 is covalently cross-linked (Glycyl lysine isopeptide (Lys-Gly) (interchain with G-Cter in SUMO2)). A phosphoserine mark is found at S332 and S369. Residue K378 forms a Glycyl lysine isopeptide (Lys-Gly) (interchain with G-Cter in SUMO2) linkage. S387, S389, S391, and S413 each carry phosphoserine. A phosphothreonine mark is found at T417 and T423. Residues 425–434 (EASSPPTHIQ) show a composition bias toward polar residues. 5 positions are modified to phosphoserine: S454, S477, S479, S491, and S497. Over residues 506–518 (QKSSLPECSTQKG) the composition is skewed to polar residues. Basic and acidic residues predominate over residues 542-559 (ITEEPMKKQSLEQKEGRR). Residue S561 is modified to Phosphoserine. Low complexity-rich tracts occupy residues 573 to 603 (SADS…ASRP) and 646 to 662 (RSAS…GVSR). K654 is subject to N6,N6,N6-trimethyllysine; by EHMT2; alternate. K654 is subject to N6,N6-dimethyllysine; by EHMT2; alternate. Phosphoserine occurs at positions 655, 657, 710, and 729. K732 participates in a covalent cross-link: Glycyl lysine isopeptide (Lys-Gly) (interchain with G-Cter in SUMO2). Residues 744–754 (TQPQTSETQIS) show a composition bias toward polar residues. 2 stretches are compositionally biased toward basic and acidic residues: residues 757–767 (LESERTHHTVE) and 798–815 (NDER…KESS). S825 and S838 each carry phosphoserine. Over residues 855 to 866 (TAATQKKPSISI) the composition is skewed to polar residues. K861 is modified (N6-acetyllysine; alternate). A Glycyl lysine isopeptide (Lys-Gly) (interchain with G-Cter in SUMO2); alternate cross-link involves residue K861. A Glycyl lysine isopeptide (Lys-Gly) (interchain with G-Cter in SUMO2) cross-link involves residue K879. Positions 892 to 915 (ADDSRISEDETERNGDDGTHDKGL) are enriched in basic and acidic residues. The disordered stretch occupies residues 892-950 (ADDSRISEDETERNGDDGTHDKGLKICRTVTQVVPAEGQENGQREEEEEKEPEAELPAP). S895 and S898 each carry phosphoserine. Over residues 936-945 (EEEEEKEPEA) the composition is skewed to acidic residues. K969 participates in a covalent cross-link: Glycyl lysine isopeptide (Lys-Gly) (interchain with G-Cter in SUMO2). T975 bears the Phosphothreonine mark. 3 positions are modified to phosphoserine: S986, S989, and S1003. Glycyl lysine isopeptide (Lys-Gly) (interchain with G-Cter in SUMO2) cross-links involve residues K1046 and K1106. Disordered stretches follow at residues 1104–1214 (ETKA…DDLF) and 1226–1338 (LPLT…GGRR). The segment covering 1115–1129 (PLHPPPPPPVQPPPH) has biased composition (pro residues). Residues 1130 to 1174 (PRAEQREQERAVREQWAEREREMERRERTRSEREWDRDKVREGPR) show a composition bias toward basic and acidic residues. Residues 1175-1192 (SRSRSRDRRRKERAKSKE) are compositionally biased toward basic residues. Position 1179 is a phosphoserine; by SRPK2 and PKB/AKT1 (S1179). Basic and acidic residues-rich tracts occupy residues 1193–1214 (KKSE…DDLF) and 1236–1317 (KEAE…DRRD). The sufficient for interaction with RNPS1 and SAP18 and formation of the ASAP complex stretch occupies residues 1209 to 1236 (LLDDLFRKTKAAPCIYWLPLTESQIVQK).

In terms of assembly, found in a mRNA splicing-dependent exon junction complex (EJC). Component of the heterotrimeric ASAP (apoptosis- and splicing-associated protein) complexes consisting of RNPS1, SAP18 and different isoforms of ACIN1; the association of SAP18 seems to require a preformed RNPS1:ACIN1 complex. Interacts with API5. Interacts with SRPK2 in a phosphorylation-dependent manner. Undergoes proteolytic cleavage; the processed form is active, contrary to the uncleaved form. Post-translationally, phosphorylation on Ser-1179 by SRPK2 up-regulates its stimulatory effect on cyclin A1.

Its subcellular location is the nucleus. The protein resides in the nucleus speckle. It localises to the nucleoplasm. Auxiliary component of the splicing-dependent multiprotein exon junction complex (EJC) deposited at splice junction on mRNAs. The EJC is a dynamic structure consisting of core proteins and several peripheral nuclear and cytoplasmic associated factors that join the complex only transiently either during EJC assembly or during subsequent mRNA metabolism. Component of the ASAP complexes which bind RNA in a sequence-independent manner and are proposed to be recruited to the EJC prior to or during the splicing process and to regulate specific excision of introns in specific transcription subsets; ACIN1 confers RNA-binding to the complex. The ASAP complex can inhibit RNA processing during in vitro splicing reactions. The ASAP complex promotes apoptosis and is disassembled after induction of apoptosis. Involved in the splicing modulation of BCL2L1/Bcl-X (and probably other apoptotic genes); specifically inhibits formation of proapoptotic isoforms such as Bcl-X(S); the activity is different from the established EJC assembly and function. Induces apoptotic chromatin condensation after activation by CASP3. Regulates cyclin A1, but not cyclin A2, expression in leukemia cells. This is Apoptotic chromatin condensation inducer in the nucleus (Acin1) from Mus musculus (Mouse).